Reading from the N-terminus, the 215-residue chain is Large ribosomal subunit protein uL4 (215 aa).

The interval 43–100 is disordered; it reads AAKRQGTHSTKTRGEVSGGGKKPYRQKGSGRARQGSTRAPQFTGGGTVHGPKPRDYSQ.

This sequence belongs to the universal ribosomal protein uL4 family. Part of the 50S ribosomal subunit.

One of the primary rRNA binding proteins, this protein initially binds near the 5'-end of the 23S rRNA. It is important during the early stages of 50S assembly. It makes multiple contacts with different domains of the 23S rRNA in the assembled 50S subunit and ribosome. Its function is as follows. Forms part of the polypeptide exit tunnel. In Mycolicibacterium smegmatis (Mycobacterium smegmatis), this protein is Large ribosomal subunit protein uL4.